Here is a 364-residue protein sequence, read N- to C-terminus: Ribosomal RNA small subunit methyltransferase H (364 aa).

Residues 55–57 (GGH), aspartate 75, phenylalanine 101, aspartate 122, and glutamine 129 contribute to the S-adenosyl-L-methionine site. The segment at 333–364 (LPPGGGAGFVKAGRVPGEPVRGTRAGSKGRRR) is disordered.

This sequence belongs to the methyltransferase superfamily. RsmH family.

It is found in the cytoplasm. It catalyses the reaction cytidine(1402) in 16S rRNA + S-adenosyl-L-methionine = N(4)-methylcytidine(1402) in 16S rRNA + S-adenosyl-L-homocysteine + H(+). Specifically methylates the N4 position of cytidine in position 1402 (C1402) of 16S rRNA. The sequence is that of Ribosomal RNA small subunit methyltransferase H from Bordetella bronchiseptica (strain ATCC BAA-588 / NCTC 13252 / RB50) (Alcaligenes bronchisepticus).